A 172-amino-acid chain; its full sequence is Translation initiation factor IF-3 (172 aa).

The protein belongs to the IF-3 family. In terms of assembly, monomer.

Its subcellular location is the cytoplasm. Functionally, IF-3 binds to the 30S ribosomal subunit and shifts the equilibrium between 70S ribosomes and their 50S and 30S subunits in favor of the free subunits, thus enhancing the availability of 30S subunits on which protein synthesis initiation begins. This Thermotoga maritima (strain ATCC 43589 / DSM 3109 / JCM 10099 / NBRC 100826 / MSB8) protein is Translation initiation factor IF-3.